Consider the following 623-residue polypeptide: Phosphomethylpyrimidine synthase (623 aa).

Substrate-binding positions include Asn221, Met250, Tyr279, His315, 335 to 337 (SRG), 376 to 379 (DGLR), and Glu415. His419 serves as a coordination point for Zn(2+). Residue Tyr442 participates in substrate binding. Position 483 (His483) interacts with Zn(2+). [4Fe-4S] cluster is bound by residues Cys563, Cys566, and Cys571.

It belongs to the ThiC family. In terms of assembly, homodimer. It depends on [4Fe-4S] cluster as a cofactor.

It carries out the reaction 5-amino-1-(5-phospho-beta-D-ribosyl)imidazole + S-adenosyl-L-methionine = 4-amino-2-methyl-5-(phosphooxymethyl)pyrimidine + CO + 5'-deoxyadenosine + formate + L-methionine + 3 H(+). It participates in cofactor biosynthesis; thiamine diphosphate biosynthesis. Catalyzes the synthesis of the hydroxymethylpyrimidine phosphate (HMP-P) moiety of thiamine from aminoimidazole ribotide (AIR) in a radical S-adenosyl-L-methionine (SAM)-dependent reaction. This Parvibaculum lavamentivorans (strain DS-1 / DSM 13023 / NCIMB 13966) protein is Phosphomethylpyrimidine synthase.